Consider the following 712-residue polypeptide: Elongation factor G (712 aa).

Residues 8–290 form the tr-type G domain; the sequence is TRYRNIGISA…AVIEFLPSPT (283 aa). GTP is bound by residues 17–24, 88–92, and 142–145; these read AHIDAGKT, DTPGH, and NKMD.

It belongs to the TRAFAC class translation factor GTPase superfamily. Classic translation factor GTPase family. EF-G/EF-2 subfamily.

Its subcellular location is the cytoplasm. In terms of biological role, catalyzes the GTP-dependent ribosomal translocation step during translation elongation. During this step, the ribosome changes from the pre-translocational (PRE) to the post-translocational (POST) state as the newly formed A-site-bound peptidyl-tRNA and P-site-bound deacylated tRNA move to the P and E sites, respectively. Catalyzes the coordinated movement of the two tRNA molecules, the mRNA and conformational changes in the ribosome. The chain is Elongation factor G from Acinetobacter baumannii (strain SDF).